The primary structure comprises 702 residues: Protein crooked neck (702 aa).

HAT repeat units lie at residues 56–88 (DYQQ…WEEQ), 90–122 (QEIQ…MEMK), 124–156 (KQVN…MEEM), 158–189 (ENVA…FELR), 191–222 (KEID…FEES), 224–259 (GFIH…FEEG), 261–295 (KEHD…HEKK), 305–337 (VIVS…LIEA), 339–373 (GDRD…LWIN), 383–419 (EDAE…FEIR), 454–486 (REFE…LENL), 488–522 (GDTD…FEVA), and 524–555 (GETE…FEMG). A Nuclear localization signal motif is present at residues 620–628 (PRRIKKRQK). A disordered region spans residues 670–702 (KDNTVDDPPATAIASEPEPAADAAPADTTDSGD). Over residues 683–702 (ASEPEPAADAAPADTTDSGD) the composition is skewed to low complexity.

This sequence belongs to the crooked-neck family. As to quaternary structure, colocalizes with a complex containing snRNP proteins. In terms of tissue distribution, transcribed in all cells during embryonic development.

It is found in the nucleus speckle. Functionally, may be involved in pre-mRNA splicing process. Involved in embryonic neurogenesis and cell rearrangement during Malpighian tubule morphogenesis. In Drosophila melanogaster (Fruit fly), this protein is Protein crooked neck (crn).